The primary structure comprises 408 residues: Argininosuccinate synthase (408 aa).

ATP-binding positions include 12 to 20 and Ala-39; that span reads AYSGGLDTS. 2 residues coordinate L-citrulline: Tyr-92 and Ser-97. Residue Gly-122 participates in ATP binding. Residues Thr-124, Asn-128, and Asp-129 each coordinate L-aspartate. Asn-128 is a binding site for L-citrulline. Residues Arg-132, Ser-183, Ser-192, Glu-268, and Tyr-280 each coordinate L-citrulline.

Belongs to the argininosuccinate synthase family. Type 1 subfamily. As to quaternary structure, homotetramer.

Its subcellular location is the cytoplasm. The enzyme catalyses L-citrulline + L-aspartate + ATP = 2-(N(omega)-L-arginino)succinate + AMP + diphosphate + H(+). It participates in amino-acid biosynthesis; L-arginine biosynthesis; L-arginine from L-ornithine and carbamoyl phosphate: step 2/3. In Caulobacter vibrioides (strain ATCC 19089 / CIP 103742 / CB 15) (Caulobacter crescentus), this protein is Argininosuccinate synthase.